A 436-amino-acid polypeptide reads, in one-letter code: MNALVRRCVARTGIPSIWRRKCFSSGNEPAESNHVTPMLRHLMYKIKSTGPITVAEYMKEVLTNPAKGYYVHHDMLGEKGDFITSPEISQIFGELLGVWFVSEWMASGKSTAFQLVELGPGRGTLTADILRVFSQLGSVLKTCDISIHLVEVSQKLSEIQALTLTEETVPLERDAESLVYMKGVTKSGIPISWYRDLKDVPTGYSFYLAHEFFDVLPVHKFQKTPHGWREVFVDIDPQSPDKLRFVLAPCATPAEAFIQRDERREHVEVCPDAGVVIQELSQRIASTGGAALIADYGHDGTKTDTLRGFYEHQLHDVLTAPGTADLTADVDFSYLRRMAQGRVASLGPVEQRTFLKNMGIDVRLKVLLDKAGDPSLQQQLLRGYDMLMNPQKMGERFHFFALLPHQRLHVGSQGGKACQSEAPSTSVPGFDELVWH.

A mitochondrion-targeting transit peptide spans 1 to 41; that stretch reads MNALVRRCVARTGIPSIWRRKCFSSGNEPAESNHVTPMLRH. The disordered stretch occupies residues 413-436; the sequence is QGGKACQSEAPSTSVPGFDELVWH.

It belongs to the NDUFAF7 family. In terms of assembly, interacts with NDUFS2.

The protein localises to the mitochondrion. The catalysed reaction is L-arginyl-[protein] + 2 S-adenosyl-L-methionine = N(omega),N(omega)'-dimethyl-L-arginyl-[protein] + 2 S-adenosyl-L-homocysteine + 2 H(+). In terms of biological role, arginine methyltransferase involved in the assembly or stability of mitochondrial NADH:ubiquinone oxidoreductase complex (complex I). Acts by mediating symmetric dimethylation of 'Arg-118' of NDUFS2 after it assembles into the complex I, stabilizing the early intermediate complex. This Rattus norvegicus (Rat) protein is Protein arginine methyltransferase NDUFAF7, mitochondrial.